We begin with the raw amino-acid sequence, 416 residues long: MAPPASTASSADPSKPTAQKLTEESDEKTLRKYFSTKVDDAQQKVADKSQNVRRLQAQRNELNTKVRMLKEELQQLHEQGSYVGEVSKAMDKKKVLVKVHPEGKYVVDVDKSIDINSLNTGARVALRADSYALHKLLPNKVDPLVSLMMVEKVPDSTYEMVGGLDKQIKEIKEVIELPVKHPELFDALGIAQPKGVLLFGPPGTGKTLLARAVAHHTECTFIRVSGSELVQKFIGEGARMVRELFVMAREHAPSIIFMDEIDSIGSSRVEGSSGGDSEVQRTMLELLNQLDGFEATKNIKVIMATNRIDILDPALLRPGRIDRKIEFPAPDEKARADILKIHSRKMNLMRGINMAKIAEQIPGASGAEVKSVCTEAGMFALRERRIHVTQEDFEMAVGKVMQKDSEKNMSIKKLWK.

The span at 1–18 (MAPPASTASSADPSKPTA) shows a compositional bias: low complexity. Residues 1–29 (MAPPASTASSADPSKPTAQKLTEESDEKT) form a disordered region. ATP is bound at residue 200–207 (GPPGTGKT).

It belongs to the AAA ATPase family. As to quaternary structure, component of the 19S proteasome regulatory particle complex. The 26S proteasome consists of a 20S core particle (CP) and two 19S regulatory subunits (RP). Interacts with elt-2.

It is found in the cytoplasm. The protein localises to the nucleus. Its function is as follows. Component of the 26S proteasome, a multiprotein complex involved in the ATP-dependent degradation of ubiquitinated proteins. This complex plays a key role in the maintenance of protein homeostasis by removing misfolded or damaged proteins, which could impair cellular functions, and by removing proteins whose functions are no longer required. Therefore, the proteasome participates in numerous cellular processes, including cell cycle progression, apoptosis, or DNA damage repair. Belongs to the heterohexameric ring of AAA (ATPases associated with diverse cellular activities) proteins that unfolds ubiquitinated target proteins that are concurrently translocated into a proteolytic chamber and degraded into peptides. In addition, regulates gene expression in response to bacterial infection. Binds to the GATA transcription factor elt-2 to control its transcriptional activity and thus the expression of elt-2-dependent genes in response to infection by Gram-negative bacteria such as P.aeruginosa. The protein is 26S proteasome regulatory subunit 8 of Caenorhabditis elegans.